The chain runs to 223 residues: Urease accessory protein UreG (223 aa).

Residues 1-31 (MAKHSHDHTHDHHDRPRRVRKPGEPLRIGVG) are disordered. 32 to 39 (GPVGSGKT) provides a ligand contact to GTP.

This sequence belongs to the SIMIBI class G3E GTPase family. UreG subfamily. In terms of assembly, homodimer. UreD, UreF and UreG form a complex that acts as a GTP-hydrolysis-dependent molecular chaperone, activating the urease apoprotein by helping to assemble the nickel containing metallocenter of UreC. The UreE protein probably delivers the nickel.

It is found in the cytoplasm. Functionally, facilitates the functional incorporation of the urease nickel metallocenter. This process requires GTP hydrolysis, probably effectuated by UreG. The sequence is that of Urease accessory protein UreG from Mycobacterium marinum (strain ATCC BAA-535 / M).